The primary structure comprises 176 residues: NADH-quinone oxidoreductase subunit I 2 (176 aa).

4Fe-4S ferredoxin-type domains lie at 45-77 (IVLT…MEAA) and 87-116 (RWFR…MTPD). 8 residues coordinate [4Fe-4S] cluster: cysteine 57, cysteine 60, cysteine 63, cysteine 67, cysteine 96, cysteine 99, cysteine 102, and cysteine 106.

This sequence belongs to the complex I 23 kDa subunit family. In terms of assembly, NDH-1 is composed of 14 different subunits. Subunits NuoA, H, J, K, L, M, N constitute the membrane sector of the complex. Requires [4Fe-4S] cluster as cofactor.

It localises to the cell inner membrane. It catalyses the reaction a quinone + NADH + 5 H(+)(in) = a quinol + NAD(+) + 4 H(+)(out). Functionally, NDH-1 shuttles electrons from NADH, via FMN and iron-sulfur (Fe-S) centers, to quinones in the respiratory chain. The immediate electron acceptor for the enzyme in this species is believed to be ubiquinone. Couples the redox reaction to proton translocation (for every two electrons transferred, four hydrogen ions are translocated across the cytoplasmic membrane), and thus conserves the redox energy in a proton gradient. In Geobacter sulfurreducens (strain ATCC 51573 / DSM 12127 / PCA), this protein is NADH-quinone oxidoreductase subunit I 2.